Here is a 291-residue protein sequence, read N- to C-terminus: ATP synthase gamma chain (291 aa).

The protein belongs to the ATPase gamma chain family. In terms of assembly, F-type ATPases have 2 components, CF(1) - the catalytic core - and CF(0) - the membrane proton channel. CF(1) has five subunits: alpha(3), beta(3), gamma(1), delta(1), epsilon(1). CF(0) has three main subunits: a, b and c.

The protein localises to the cell inner membrane. Functionally, produces ATP from ADP in the presence of a proton gradient across the membrane. The gamma chain is believed to be important in regulating ATPase activity and the flow of protons through the CF(0) complex. The chain is ATP synthase gamma chain from Burkholderia thailandensis (strain ATCC 700388 / DSM 13276 / CCUG 48851 / CIP 106301 / E264).